Reading from the N-terminus, the 272-residue chain is Dermonecrotic toxin StSicTox-betaIC1 (272 aa).

His5 is an active-site residue. Mg(2+) contacts are provided by Glu25 and Asp27. The active-site Nucleophile is the His41. Disulfide bonds link Cys45/Cys51 and Cys47/Cys191. Residue Asp85 participates in Mg(2+) binding.

The protein belongs to the arthropod phospholipase D family. Class II subfamily. Class IIb sub-subfamily. The cofactor is Mg(2+). As to expression, expressed by the venom gland.

The protein localises to the secreted. It catalyses the reaction an N-(acyl)-sphingosylphosphocholine = an N-(acyl)-sphingosyl-1,3-cyclic phosphate + choline. It carries out the reaction N-hexanoyl-sphing-4-enine-1-phosphocholine = N-(hexanoyl)-sphing-4-enine-1,3-cyclic phosphate + choline. The catalysed reaction is an N-(acyl)-sphingosylphosphoethanolamine = an N-(acyl)-sphingosyl-1,3-cyclic phosphate + ethanolamine. The enzyme catalyses N-dodecanoyl-heptadecasphing-4-enine-1-phosphoethanolamine = N-dodecanoyl-heptadecasphing-4-enine-1,3-cyclic phosphate + ethanolamine. It catalyses the reaction a 1-acyl-sn-glycero-3-phosphoethanolamine = a 1-acyl-sn-glycero-2,3-cyclic phosphate + ethanolamine. It carries out the reaction 1-tetradecanoyl-sn-glycero-3-phosphoethanolamine = 1-tetradecanoyl-sn-glycero-2,3-cyclic phosphate + ethanolamine. Dermonecrotic toxins cleave the phosphodiester linkage between the phosphate and headgroup of certain phospholipids (sphingolipid and lysolipid substrates), forming an alcohol (often choline) and a cyclic phosphate. This toxin acts on lysophosphatidylethanolamine (LPE) and ceramide phosphoethanolamine (CPE) with high activity. This toxin acts on sphingomyelin (SM) with very low activity and is not active on lysophosphatidylserine (LPS), lysophosphatidylcholine (LPC) and lysophosphatidylglycerol (LPG). It acts by transphosphatidylation, releasing exclusively cyclic phosphate as second products. It is not surprising that spider toxins have affinity for ethanolamine-containing sphingolipids since they are common in insect prey. Induces dermonecrosis, hemolysis, increased vascular permeability, edema, inflammatory response, and platelet aggregation. The chain is Dermonecrotic toxin StSicTox-betaIC1 from Sicarius terrosus (Cave spider).